The primary structure comprises 223 residues: Translation initiation factor 6 (223 aa).

Belongs to the eIF-6 family. In terms of assembly, associates with the 50S ribosomal subunit, specifically with protein L14. Binds to 23S rRNA, possibly between where the 30S and 50S subunits associate to initiate translation. In terms of processing, modified in an unknown fashion (not phosphorylation) following release from 50S ribosomal subunits.

Its function is as follows. Binds to the 50S ribosomal subunit and prevents its association with the 30S ribosomal subunit to form the 70S initiation complex. Inhibits translation of both leadered and leaderless mRNAs, maybe by binding to the 50S ribosome subunit, preventing it from binding to the 30S subunit. The sequence is that of Translation initiation factor 6 from Saccharolobus solfataricus (strain ATCC 35092 / DSM 1617 / JCM 11322 / P2) (Sulfolobus solfataricus).